The chain runs to 333 residues: Phosphoribosylformylglycinamidine cyclo-ligase (333 aa).

This sequence belongs to the AIR synthase family.

The protein localises to the cytoplasm. The enzyme catalyses 2-formamido-N(1)-(5-O-phospho-beta-D-ribosyl)acetamidine + ATP = 5-amino-1-(5-phospho-beta-D-ribosyl)imidazole + ADP + phosphate + H(+). It functions in the pathway purine metabolism; IMP biosynthesis via de novo pathway; 5-amino-1-(5-phospho-D-ribosyl)imidazole from N(2)-formyl-N(1)-(5-phospho-D-ribosyl)glycinamide: step 2/2. In Methanosarcina barkeri (strain Fusaro / DSM 804), this protein is Phosphoribosylformylglycinamidine cyclo-ligase.